We begin with the raw amino-acid sequence, 225 residues long: ATP-dependent dethiobiotin synthetase BioD (225 aa).

12–17 lines the ATP pocket; it reads EVGKTY. Mg(2+) is bound at residue threonine 16. Lysine 37 is an active-site residue. Serine 41 lines the substrate pocket. ATP contacts are provided by residues aspartate 52, 114-117, and 174-175; these read EGAG and NC. Mg(2+)-binding residues include aspartate 52 and glutamate 114.

The protein belongs to the dethiobiotin synthetase family. In terms of assembly, homodimer. Mg(2+) is required as a cofactor.

It localises to the cytoplasm. It carries out the reaction (7R,8S)-7,8-diammoniononanoate + CO2 + ATP = (4R,5S)-dethiobiotin + ADP + phosphate + 3 H(+). The protein operates within cofactor biosynthesis; biotin biosynthesis; biotin from 7,8-diaminononanoate: step 1/2. In terms of biological role, catalyzes a mechanistically unusual reaction, the ATP-dependent insertion of CO2 between the N7 and N8 nitrogen atoms of 7,8-diaminopelargonic acid (DAPA, also called 7,8-diammoniononanoate) to form a ureido ring. The polypeptide is ATP-dependent dethiobiotin synthetase BioD (Francisella tularensis subsp. mediasiatica (strain FSC147)).